We begin with the raw amino-acid sequence, 113 residues long: Heavy metal-associated isoprenylated plant protein 15 (113 aa).

The HMA domain maps to 1–65 (MIVWMGVYDQ…KWGKAKLTLY (65 aa)). Positions 69–89 (DALKEAKIAEAKQKREEIERE) form a coiled coil. C110 bears the Cysteine methyl ester mark. C110 carries S-farnesyl cysteine lipidation. Residues 111–113 (VIC) constitute a propeptide, removed in mature form.

This sequence belongs to the HIPP family. In terms of tissue distribution, expressed in embryo sacs.

Functionally, probable heavy-metal-binding protein. The protein is Heavy metal-associated isoprenylated plant protein 15 of Arabidopsis thaliana (Mouse-ear cress).